A 118-amino-acid chain; its full sequence is Holo-[acyl-carrier-protein] synthase (118 aa).

2 residues coordinate Mg(2+): Asp-8 and Glu-58.

The protein belongs to the P-Pant transferase superfamily. AcpS family. Mg(2+) is required as a cofactor.

The protein localises to the cytoplasm. The catalysed reaction is apo-[ACP] + CoA = holo-[ACP] + adenosine 3',5'-bisphosphate + H(+). Its function is as follows. Transfers the 4'-phosphopantetheine moiety from coenzyme A to a Ser of acyl-carrier-protein. This is Holo-[acyl-carrier-protein] synthase from Lactobacillus helveticus (strain DPC 4571).